Here is a 518-residue protein sequence, read N- to C-terminus: Major facilitator superfamily multidrug transporter mfsC (518 aa).

Transmembrane regions (helical) follow at residues V27–F47, W65–G85, F88–N108, I123–F143, A152–S172, I183–P203, and P212–L232. N-linked (GlcNAc...) asparagine glycosylation is present at N233. The next 7 membrane-spanning stretches (helical) occupy residues S242 to V262, F281 to I301, I315 to A335, I347 to P367, T380 to L400, A409 to G429, and A455 to W475.

Belongs to the major facilitator superfamily. EmrB family.

The protein resides in the membrane. In terms of biological role, major facilitator superfamily transporter that may be involved in A.fumigatus adaptation to azoles such as vorizonazole. The chain is Major facilitator superfamily multidrug transporter mfsC from Aspergillus fumigatus (strain ATCC MYA-4609 / CBS 101355 / FGSC A1100 / Af293) (Neosartorya fumigata).